The following is a 705-amino-acid chain: Polyribonucleotide nucleotidyltransferase (705 aa).

The Mg(2+) site is built by aspartate 487 and aspartate 493. The KH domain maps to 554–613 (PKILTMAIEPDKIRDVIGPSGKQINQIIDETGVKIDIEQDGSIFISSTDNEMNKKAKQII). The region spanning 623–691 (GQIYLGKVKR…RQGRVNLSRK (69 aa)) is the S1 motif domain.

The protein belongs to the polyribonucleotide nucleotidyltransferase family. Mg(2+) is required as a cofactor.

The protein localises to the cytoplasm. It catalyses the reaction RNA(n+1) + phosphate = RNA(n) + a ribonucleoside 5'-diphosphate. Functionally, involved in mRNA degradation. Catalyzes the phosphorolysis of single-stranded polyribonucleotides processively in the 3'- to 5'-direction. The chain is Polyribonucleotide nucleotidyltransferase from Oceanobacillus iheyensis (strain DSM 14371 / CIP 107618 / JCM 11309 / KCTC 3954 / HTE831).